The chain runs to 674 residues: UvrABC system protein B (674 aa).

The 158-residue stretch at 26-183 folds into the Helicase ATP-binding domain; that stretch reads EGLEDGLAHQ…RRLAELQYTR (158 aa). 39–46 contacts ATP; the sequence is GVTGSGKT. Positions 92 to 115 match the Beta-hairpin motif; that stretch reads YYDYYQPEAYVPSSDTFIEKDASV. Residues 431–597 form the Helicase C-terminal domain; sequence QVDDLLSEIR…GLNKKISDIL (167 aa). Positions 634 to 669 constitute a UVR domain; that stretch reads QKRIHQLEAQMQQHAQNLEFEEAAQVRDQLHQVREL.

This sequence belongs to the UvrB family. As to quaternary structure, forms a heterotetramer with UvrA during the search for lesions. Interacts with UvrC in an incision complex.

It localises to the cytoplasm. Functionally, the UvrABC repair system catalyzes the recognition and processing of DNA lesions. A damage recognition complex composed of 2 UvrA and 2 UvrB subunits scans DNA for abnormalities. Upon binding of the UvrA(2)B(2) complex to a putative damaged site, the DNA wraps around one UvrB monomer. DNA wrap is dependent on ATP binding by UvrB and probably causes local melting of the DNA helix, facilitating insertion of UvrB beta-hairpin between the DNA strands. Then UvrB probes one DNA strand for the presence of a lesion. If a lesion is found the UvrA subunits dissociate and the UvrB-DNA preincision complex is formed. This complex is subsequently bound by UvrC and the second UvrB is released. If no lesion is found, the DNA wraps around the other UvrB subunit that will check the other stand for damage. The chain is UvrABC system protein B from Erwinia tasmaniensis (strain DSM 17950 / CFBP 7177 / CIP 109463 / NCPPB 4357 / Et1/99).